We begin with the raw amino-acid sequence, 251 residues long: Ditrans,polycis-undecaprenyl-diphosphate synthase ((2E,6E)-farnesyl-diphosphate specific) (251 aa).

Residue D19 is part of the active site. D19 provides a ligand contact to Mg(2+). Residues 20–23 (GNNR), W24, H36, and 64–66 (SSE) contribute to the substrate site. The active-site Proton acceptor is N67. Substrate contacts are provided by residues W68, R70, R187, and 193 to 195 (RIS). Mg(2+) is bound at residue E206.

This sequence belongs to the UPP synthase family. As to quaternary structure, homodimer. Mg(2+) serves as cofactor.

It catalyses the reaction 8 isopentenyl diphosphate + (2E,6E)-farnesyl diphosphate = di-trans,octa-cis-undecaprenyl diphosphate + 8 diphosphate. Its function is as follows. Catalyzes the sequential condensation of isopentenyl diphosphate (IPP) with (2E,6E)-farnesyl diphosphate (E,E-FPP) to yield (2Z,6Z,10Z,14Z,18Z,22Z,26Z,30Z,34E,38E)-undecaprenyl diphosphate (di-trans,octa-cis-UPP). UPP is the precursor of glycosyl carrier lipid in the biosynthesis of bacterial cell wall polysaccharide components such as peptidoglycan and lipopolysaccharide. The sequence is that of Ditrans,polycis-undecaprenyl-diphosphate synthase ((2E,6E)-farnesyl-diphosphate specific) from Pseudomonas aeruginosa (strain ATCC 15692 / DSM 22644 / CIP 104116 / JCM 14847 / LMG 12228 / 1C / PRS 101 / PAO1).